Reading from the N-terminus, the 301-residue chain is Homoserine O-acetyltransferase (301 aa).

The Acyl-thioester intermediate role is filled by Cys-142. Lys-163 and Ser-192 together coordinate substrate. His-235 serves as the catalytic Proton acceptor. Glu-237 is a catalytic residue. Arg-249 lines the substrate pocket.

The protein belongs to the MetA family.

Its subcellular location is the cytoplasm. The enzyme catalyses L-homoserine + acetyl-CoA = O-acetyl-L-homoserine + CoA. It functions in the pathway amino-acid biosynthesis; L-methionine biosynthesis via de novo pathway; O-acetyl-L-homoserine from L-homoserine: step 1/1. In terms of biological role, transfers an acetyl group from acetyl-CoA to L-homoserine, forming acetyl-L-homoserine. This is Homoserine O-acetyltransferase from Bacillus cereus (strain AH187).